We begin with the raw amino-acid sequence, 447 residues long: Argininosuccinate synthase (447 aa).

ATP is bound by residues Ala20–Ser28 and Ala46. Tyr102 provides a ligand contact to L-citrulline. Gly132 and Thr134 together coordinate ATP. The L-aspartate site is built by Thr134, Asn138, and Asp139. L-citrulline is bound at residue Asn138. Asp139 is a binding site for ATP. Positions 142 and 195 each coordinate L-citrulline. Asp197 is a binding site for ATP. Positions 204, 206, and 283 each coordinate L-citrulline.

It belongs to the argininosuccinate synthase family. Type 2 subfamily. Homotetramer.

It is found in the cytoplasm. The catalysed reaction is L-citrulline + L-aspartate + ATP = 2-(N(omega)-L-arginino)succinate + AMP + diphosphate + H(+). It functions in the pathway amino-acid biosynthesis; L-arginine biosynthesis; L-arginine from L-ornithine and carbamoyl phosphate: step 2/3. The chain is Argininosuccinate synthase (argG) from Neisseria meningitidis serogroup B (strain ATCC BAA-335 / MC58).